A 403-amino-acid chain; its full sequence is Palmitoyltransferase ZDHHC23-A (403 aa).

The Cytoplasmic segment spans residues Met1 to Thr70. A helical membrane pass occupies residues Val71 to Leu91. Residue Arg92 is a topological domain, lumenal. The chain crosses the membrane as a helical span at residues Val93–Leu113. Topologically, residues Trp114–Arg125 are cytoplasmic. A helical membrane pass occupies residues Thr126 to Thr146. At Glu147–Asp153 the chain is on the lumenal side. A helical membrane pass occupies residues Val154–Val174. Residues Arg175 to Arg268 lie on the Cytoplasmic side of the membrane. The region spanning Lys225–Leu275 is the DHHC domain. Residue Cys255 is the S-palmitoyl cysteine intermediate of the active site. A helical membrane pass occupies residues Gln269–Leu289. Topologically, residues Arg290–Thr319 are lumenal. The chain crosses the membrane as a helical span at residues Cys320 to Ile340. Topologically, residues Asn341 to Val403 are cytoplasmic.

The protein belongs to the DHHC palmitoyltransferase family.

The protein resides in the golgi apparatus membrane. It localises to the golgi apparatus. It is found in the trans-Golgi network membrane. The enzyme catalyses L-cysteinyl-[protein] + hexadecanoyl-CoA = S-hexadecanoyl-L-cysteinyl-[protein] + CoA. Functionally, palmitoyltransferase that could catalyze the addition of palmitate onto various protein substrates and be involved in a variety of cellular processes. The chain is Palmitoyltransferase ZDHHC23-A (zdhhc23a) from Danio rerio (Zebrafish).